A 195-amino-acid chain; its full sequence is Interferon tau-1 (195 aa).

The N-terminal stretch at Met-1–Gly-23 is a signal peptide. 2 disulfide bridges follow: Cys-24-Cys-122 and Cys-52-Cys-162. Asn-101 is a glycosylation site (N-linked (GlcNAc...) asparagine).

It belongs to the alpha/beta interferon family. IFN-alphaII subfamily. As to expression, constitutively and exclusively expressed in the mononuclear cells of the extraembryonic trophectoderm.

The protein resides in the secreted. Paracrine hormone primarily responsible for maternal recognition of pregnancy. Interacts with endometrial receptors, probably type I interferon receptors, and blocks estrogen receptor expression, preventing the estrogen-induced increase in oxytocin receptor expression in the endometrium. This results in the suppression of the pulsatile endometrial release of the luteolytic hormone prostaglandin F2-alpha, hindering the regression of the corpus luteum (luteolysis) and therefore a return to ovarian cyclicity. This, and a possible direct effect of IFN-tau on prostaglandin synthesis, leads in turn to continued ovarian progesterone secretion, which stimulates the secretion by the endometrium of the nutrients required for the growth of the conceptus. In summary, displays particularly high antiviral and antiproliferative potency concurrently with particular weak cytotoxicity, high antiluteolytic activity and immunomodulatory properties. In contrast with other IFNs, IFN-tau is not virally inducible. This Bos taurus (Bovine) protein is Interferon tau-1 (IFNT1).